Consider the following 180-residue polypeptide: ATP synthase subunit delta (180 aa).

This sequence belongs to the ATPase delta chain family. As to quaternary structure, F-type ATPases have 2 components, F(1) - the catalytic core - and F(0) - the membrane proton channel. F(1) has five subunits: alpha(3), beta(3), gamma(1), delta(1), epsilon(1). F(0) has three main subunits: a(1), b(2) and c(10-14). The alpha and beta chains form an alternating ring which encloses part of the gamma chain. F(1) is attached to F(0) by a central stalk formed by the gamma and epsilon chains, while a peripheral stalk is formed by the delta and b chains.

The protein resides in the cell inner membrane. In terms of biological role, f(1)F(0) ATP synthase produces ATP from ADP in the presence of a proton or sodium gradient. F-type ATPases consist of two structural domains, F(1) containing the extramembraneous catalytic core and F(0) containing the membrane proton channel, linked together by a central stalk and a peripheral stalk. During catalysis, ATP synthesis in the catalytic domain of F(1) is coupled via a rotary mechanism of the central stalk subunits to proton translocation. This protein is part of the stalk that links CF(0) to CF(1). It either transmits conformational changes from CF(0) to CF(1) or is implicated in proton conduction. The protein is ATP synthase subunit delta of Legionella pneumophila (strain Paris).